The chain runs to 204 residues: High frequency lysogenization protein HflD homolog (204 aa).

It belongs to the HflD family.

The protein resides in the cytoplasm. The protein localises to the cell inner membrane. The sequence is that of High frequency lysogenization protein HflD homolog from Xanthomonas axonopodis pv. citri (strain 306).